Reading from the N-terminus, the 368-residue chain is Cobalt-precorrin-5B C(1)-methyltransferase (368 aa).

It belongs to the CbiD family.

The enzyme catalyses Co-precorrin-5B + S-adenosyl-L-methionine = Co-precorrin-6A + S-adenosyl-L-homocysteine. It participates in cofactor biosynthesis; adenosylcobalamin biosynthesis; cob(II)yrinate a,c-diamide from sirohydrochlorin (anaerobic route): step 6/10. In terms of biological role, catalyzes the methylation of C-1 in cobalt-precorrin-5B to form cobalt-precorrin-6A. This chain is Cobalt-precorrin-5B C(1)-methyltransferase, found in Synechococcus sp. (strain CC9605).